The chain runs to 1377 residues: DNA-directed RNA polymerase subunit beta'' (1377 aa).

Zn(2+)-binding residues include C220, C291, C298, and C301.

The protein belongs to the RNA polymerase beta' chain family. RpoC2 subfamily. In plastids the minimal PEP RNA polymerase catalytic core is composed of four subunits: alpha, beta, beta', and beta''. When a (nuclear-encoded) sigma factor is associated with the core the holoenzyme is formed, which can initiate transcription. Zn(2+) serves as cofactor.

Its subcellular location is the plastid. The protein resides in the chloroplast. The enzyme catalyses RNA(n) + a ribonucleoside 5'-triphosphate = RNA(n+1) + diphosphate. In terms of biological role, DNA-dependent RNA polymerase catalyzes the transcription of DNA into RNA using the four ribonucleoside triphosphates as substrates. This chain is DNA-directed RNA polymerase subunit beta'', found in Nandina domestica (Heavenly bamboo).